Consider the following 145-residue polypeptide: Cystin-1 (145 aa).

The interval 1–129 (MGSGSSRSGR…PEGQSAISYD (129 aa)) is disordered. The N-myristoyl glycine moiety is linked to residue Gly2. The Ciliary targeting motif motif lies at 29–33 (ASEGG). Phosphoserine is present on Ser116.

Interacts (when myristoylated) with UNC119 and UNC119B; interaction is required for localization to cilium. As to expression, expressed primarily in the kidney and liver. Expressed at lower levels in the lung, brain and heart.

It localises to the cell projection. The protein resides in the cilium membrane. The protein localises to the cytoplasm. Its subcellular location is the cytoskeleton. It is found in the cilium axoneme. This chain is Cystin-1 (Cys1), found in Mus musculus (Mouse).